The primary structure comprises 225 residues: uncharacterized protein (225 aa).

This sequence belongs to the mimivirus L31/R44 family.

This is an uncharacterized protein from Acanthamoeba polyphaga (Amoeba).